A 1409-amino-acid chain; its full sequence is Tensin-2 (1409 aa).

The disordered stretch occupies residues 1–35; the sequence is MKSSGPVERLLRALGRRDSSRAASRPRKAEPHSFR. Positions 9 to 20 are enriched in basic and acidic residues; the sequence is RLLRALGRRDSS. A Phorbol-ester/DAG-type zinc finger spans residues 31–79; the sequence is PHSFREKVFRKKPPVCAVCKVTIDGTGVSCRVCKVATHRKCEAKVTSAC. At Thr91 the chain carries Phosphothreonine. Phosphoserine is present on residues Ser118 and Ser120. The Phosphatase tensin-type domain occupies 122–294; it reads DPLMERRWDL…SYFSGLLSGS (173 aa). Catalysis depends on Cys231, which acts as the Phosphocysteine intermediate. Positions 299-425 constitute a C2 tensin-type domain; the sequence is SSPLFLHYVL…ASVEFVFSSS (127 aa). Residue Ser455 is modified to Phosphoserine. Tyr456 is modified (phosphotyrosine). The segment at 462–536 is disordered; sequence HHEDSVDGSL…SPGRPPPTAA (75 aa). Phosphoserine is present on Ser466. Thr474 is modified (phosphothreonine). Ser481 is subject to Phosphoserine. Tyr483 is modified (phosphotyrosine). Residues 491-506 are compositionally biased toward pro residues; the sequence is RQTPPAPSPEPPPPPM. Position 555 is an omega-N-methylarginine (Arg555). Disordered stretches follow at residues 562 to 582, 812 to 1098, and 1111 to 1130; these read AILD…GVYP, PGEG…SSPA, and LSDN…QSNV. Phosphoserine is present on residues Ser820, Ser825, Ser830, Ser832, Ser835, and Ser845. Composition is skewed to polar residues over residues 900 to 918 and 930 to 940; these read SASS…SSPV and RSPTSAPTQRL. Residue Thr910 is modified to Phosphothreonine. 3 positions are modified to phosphoserine: Ser931, Ser941, and Ser972. Positions 968–982 are enriched in pro residues; the sequence is PLAPSPVSPTFPPSS. Thr977 is subject to Phosphothreonine. 2 positions are modified to phosphoserine: Ser991 and Ser1003. Over residues 1046 to 1056 the composition is skewed to pro residues; sequence PEPPQSSPTPA. The 108-residue stretch at 1140 to 1247 folds into the SH2 domain; the sequence is WYKPHLSRDQ…SLPCCLRIPS (108 aa). Thr1182 is modified (phosphothreonine). Position 1247 is a phosphoserine (Ser1247). The region spanning 1275-1408 is the PTB domain; it reads ACSVLYLTSV…FITKVLLGQR (134 aa).

This sequence belongs to the PTEN phosphatase protein family. In terms of assembly, interacts with AXL. Interacts with SYK; leading to its phosphorylation. Interacts with SQSTM1 (via PB1 domain); the interaction leads to sequestration of TNS2 in cytoplasmic aggregates with SQSTM1 and promotes TNS2 ubiquitination and proteasomal degradation. Post-translationally, ubiquitinated following sequestration in cytoplasmic aggregates with SQSTM1, leading to proteasomal degradation. In terms of tissue distribution, detected in heart, kidney, brain, thymus, spleen, liver, placenta, lung, skeletal muscle and small intestine.

The protein resides in the cell junction. Its subcellular location is the focal adhesion. The protein localises to the cell membrane. It localises to the cytoplasm. The enzyme catalyses O-phospho-L-tyrosyl-[protein] + H2O = L-tyrosyl-[protein] + phosphate. In terms of biological role, tyrosine-protein phosphatase which regulates cell motility, proliferation and muscle-response to insulin. Phosphatase activity is mediated by binding to phosphatidylinositol-3,4,5-triphosphate (PtdIns(3,4,5)P3) via the SH2 domain. In muscles and under catabolic conditions, dephosphorylates IRS1 leading to its degradation and muscle atrophy. Negatively regulates PI3K-AKT pathway activation. Dephosphorylates nephrin NPHS1 in podocytes which regulates activity of the mTORC1 complex. Under normal glucose conditions, NPHS1 outcompetes IRS1 for binding to phosphatidylinositol 3-kinase (PI3K) which balances mTORC1 activity but high glucose conditions lead to up-regulation of TNS2, increased NPHS1 dephosphorylation and activation of mTORC1, contributing to podocyte hypertrophy and proteinuria. Required for correct podocyte morphology, podocyte-glomerular basement membrane interaction and integrity of the glomerular filtration barrier. Enhances RHOA activation in the presence of DLC1. Plays a role in promoting DLC1-dependent remodeling of the extracellular matrix. The protein is Tensin-2 (TNS2) of Homo sapiens (Human).